We begin with the raw amino-acid sequence, 131 residues long: D-ribose pyranase (131 aa).

Histidine 20 (proton donor) is an active-site residue. Residues aspartate 28, histidine 98, and 120-122 (YAN) each bind substrate.

Belongs to the RbsD / FucU family. RbsD subfamily. As to quaternary structure, homodecamer.

Its subcellular location is the cytoplasm. It carries out the reaction beta-D-ribopyranose = beta-D-ribofuranose. The protein operates within carbohydrate metabolism; D-ribose degradation; D-ribose 5-phosphate from beta-D-ribopyranose: step 1/2. In terms of biological role, catalyzes the interconversion of beta-pyran and beta-furan forms of D-ribose. This Bacillus cereus (strain ATCC 10987 / NRS 248) protein is D-ribose pyranase.